A 473-amino-acid polypeptide reads, in one-letter code: Reticulon-4 receptor (473 aa).

The N-terminal stretch at 1–26 (MKRASSGGSRLLAWVLWLQAWRVATP) is a signal peptide. Disulfide bonds link C27–C33 and C31–C43. Positions 27 to 57 (CPGACVCYNEPKVTTSCPQQGLQAVPTGIPA) constitute an LRRNT domain. 9 LRR repeats span residues 56 to 79 (PASSQRIFLHGNRISYVPAASFQS), 80 to 103 (CRNLTILWLHSNALAGIDAAAFTG), 105 to 128 (TLLEQLDLSDNAQLRVVDPTTFRG), 129 to 152 (LGHLHTLHLDRCGLQELGPGLFRG), 153 to 176 (LAALQYLYLQDNNLQALPDNTFRD), 178 to 200 (GNLTHLFLHGNRIPSVPEHAFRG), 202 to 224 (HSLDRLLLHQNHVARVHPHAFRD), 225 to 248 (LGRLMTLYLFANNLSMLPAEVLVP), and 250 to 273 (RSLQYLRLNDNPWVCDCRARPLWA). N82 carries an N-linked (GlcNAc...) asparagine glycan. One can recognise an LRRCT domain in the interval 260 to 310 (NPWVCDCRARPLWAWLQKFRGSSSEVPCNLPQRLAGRDLKRLAASDLEGCA). Disulfide bonds link C264/C287, C266/C335, and C309/C336. Residues 346–446 (VLEPGRPASA…GSSGTGDAEG (101 aa)) are disordered. N372 carries N-linked (GlcNAc...) asparagine glycosylation. Over residues 413 to 429 (PRRRPGCSRKNRTRSHC) the composition is skewed to basic residues. Over residues 434 to 445 (AGSGSSGTGDAE) the composition is skewed to gly residues. S447 carries GPI-anchor amidated serine lipidation. The propeptide at 448-473 (GALPALACSLAPLGLALVLWTVLGPC) is removed in mature form.

Belongs to the Nogo receptor family. In terms of assembly, homodimer. Interacts with MAG. Interacts with RTN4 and OMG. Interacts with LINGO1 and NGFR. Interacts with KIAA0319L. Interacts with OLFM1; this inhibits interaction with LINGO1 and NGFR. Post-translationally, N-glycosylated. O-glycosylated. Contains terminal sialic acid groups on its glycan chains. In terms of tissue distribution, detected in embryonic cerebellum, in spinal cord motor neurons and in dorsal root ganglia. Detected in adult brain, in neocortex, hippocampus, striatum, thalamus and dorsal root ganglion neurons (at protein level).

The protein resides in the cell membrane. It localises to the membrane raft. Its subcellular location is the cell projection. It is found in the dendrite. The protein localises to the perikaryon. The protein resides in the axon. Its function is as follows. Receptor for RTN4, OMG and MAG. Functions as a receptor for the sialylated gangliosides GT1b and GM1. Besides, functions as a receptor for chondroitin sulfate proteoglycans. Can also bind heparin. Intracellular signaling cascades are triggered via the coreceptor NGFR. Signaling mediates activation of Rho and downstream reorganization of the actin cytoskeleton. Mediates axonal growth inhibition. May play a role in regulating axon regeneration and neuronal plasticity in the adult central nervous system. Plays a role in postnatal brain development. Required for normal axon migration across the brain midline and normal formation of the corpus callosum. Protects motoneurons against apoptosis; protection against apoptosis is probably mediated via interaction with MAG. Acts in conjunction with RTN4 and LINGO1 in regulating neuronal precursor cell motility during cortical development. Like other family members, plays a role in restricting the number dendritic spines and the number of synapses that are formed during brain development. This Rattus norvegicus (Rat) protein is Reticulon-4 receptor (Rtn4r).